We begin with the raw amino-acid sequence, 188 residues long: Urease accessory protein UreE (188 aa).

The segment at 142–174 (AYQSQAGAGHHHHHDHDHGHSHDHSHTHSHADS) is disordered. Over residues 157 to 172 (HDHGHSHDHSHTHSHA) the composition is skewed to basic and acidic residues.

It belongs to the UreE family.

Its subcellular location is the cytoplasm. Its function is as follows. Involved in urease metallocenter assembly. Binds nickel. Probably functions as a nickel donor during metallocenter assembly. This chain is Urease accessory protein UreE, found in Tolumonas auensis (strain DSM 9187 / NBRC 110442 / TA 4).